Reading from the N-terminus, the 197-residue chain is CASP-like protein 1B2 (197 aa).

At alanine 2 the chain carries N-acetylalanine. Over 2–17 (AREKIVVAGGTTKSWK) the chain is Cytoplasmic. The helical transmembrane segment at 18–38 (LLLGLRIFAFMATLAAAIVMS) threads the bilayer. Residues 39-69 (LNKETKTLVVATIGTVPIKATLTAKFQHTPA) are Extracellular-facing. The chain crosses the membrane as a helical span at residues 70–90 (FVFFVIANVMVSFHNLLMIVV). Over 91 to 106 (QIFSRKLEYKGLRLLS) the chain is Cytoplasmic. A helical membrane pass occupies residues 107–127 (IAILDMLNATLVSAAANAAVF). The Extracellular segment spans residues 128–156 (VAELGKNGNKHAKWNKVCDRFTTYCDHGA). A helical membrane pass occupies residues 157-177 (GAIIAAFAGVILMLLVSAVSI). The Cytoplasmic segment spans residues 178–197 (SRLLINSKNFSTTATTTSVV).

This sequence belongs to the Casparian strip membrane proteins (CASP) family. As to quaternary structure, homodimer and heterodimers.

The protein resides in the cell membrane. The sequence is that of CASP-like protein 1B2 from Arabidopsis thaliana (Mouse-ear cress).